Reading from the N-terminus, the 220-residue chain is Claudin-6 (220 aa).

The Cytoplasmic portion of the chain corresponds to 1-7 (MASAGMQ). A helical membrane pass occupies residues 8–28 (ILGVVLTLLGWVNGLVSCALP). Residues 29–81 (MWKVTAFIGNSIVVAQVVWEGLWMSCVVQSTGQMQCKVYDSLLALPQDLQAAR) lie on the Extracellular side of the membrane. Residues 82–102 (ALCVIALLVALFGLLVYLAGA) traverse the membrane as a helical segment. Topologically, residues 103–116 (KCTTCVEEKDSKAR) are cytoplasmic. A helical membrane pass occupies residues 117 to 137 (LVLTSGIVFVISGVLTLIPVC). Topologically, residues 138–160 (WTAHAIIRDFYNPLVAEAQKREL) are extracellular. The helical transmembrane segment at 161 to 181 (GASLYLGWAASGLLLLGGGLL) threads the bilayer. The Cytoplasmic segment spans residues 182 to 220 (CCTCPSGGSQGPSHYMARYSTSAPAISRGPSEYPTKNYV). A phosphoserine mark is found at Ser-201, Ser-203, Ser-208, and Ser-212. Positions 219–220 (YV) are interactions with TJP1, TJP2 and TJP3.

The protein belongs to the claudin family. As to quaternary structure, directly interacts with TJP1/ZO-1, TJP2/ZO-2 and TJP3/ZO-3. Interacts with CLDN1, CD81 and OCLN. As to expression, expressed in the liver, in peripheral blood mononuclear cells and hepatocarcinoma cell lines.

The protein resides in the cell junction. Its subcellular location is the tight junction. It localises to the cell membrane. Its function is as follows. Plays a major role in tight junction-specific obliteration of the intercellular space. (Microbial infection) Acts as a receptor for hepatitis C virus (HCV) entry into hepatic cells. The sequence is that of Claudin-6 (CLDN6) from Homo sapiens (Human).